Here is a 46-residue protein sequence, read N- to C-terminus: MQVLSSLRSAKNRHPDCKVVRRKGRIYVICKTNPRFKAVQGRKKKR.

It belongs to the bacterial ribosomal protein bL36 family.

In Serratia proteamaculans (strain 568), this protein is Large ribosomal subunit protein bL36.